The primary structure comprises 317 residues: Putative 2-hydroxyacid dehydrogenase SAR2389 (317 aa).

NAD(+) contacts are provided by residues 155-156 (EI), 234-236 (ASR), and Asp260. Arg236 is an active-site residue. Glu265 is a catalytic residue. The active-site Proton donor is His283. 283–286 (HIGN) is an NAD(+) binding site.

Belongs to the D-isomer specific 2-hydroxyacid dehydrogenase family.

This chain is Putative 2-hydroxyacid dehydrogenase SAR2389, found in Staphylococcus aureus (strain MRSA252).